The chain runs to 319 residues: Acetyl-coenzyme A carboxylase carboxyl transferase subunit alpha (319 aa).

One can recognise a CoA carboxyltransferase C-terminal domain in the interval 32-293; sequence NIQEEISRLQ…HTALAEALQT (262 aa).

The protein belongs to the AccA family. Acetyl-CoA carboxylase is a heterohexamer composed of biotin carboxyl carrier protein (AccB), biotin carboxylase (AccC) and two subunits each of ACCase subunit alpha (AccA) and ACCase subunit beta (AccD).

It is found in the cytoplasm. The enzyme catalyses N(6)-carboxybiotinyl-L-lysyl-[protein] + acetyl-CoA = N(6)-biotinyl-L-lysyl-[protein] + malonyl-CoA. It participates in lipid metabolism; malonyl-CoA biosynthesis; malonyl-CoA from acetyl-CoA: step 1/1. In terms of biological role, component of the acetyl coenzyme A carboxylase (ACC) complex. First, biotin carboxylase catalyzes the carboxylation of biotin on its carrier protein (BCCP) and then the CO(2) group is transferred by the carboxyltransferase to acetyl-CoA to form malonyl-CoA. In Thioalkalivibrio sulfidiphilus (strain HL-EbGR7), this protein is Acetyl-coenzyme A carboxylase carboxyl transferase subunit alpha.